Here is a 165-residue protein sequence, read N- to C-terminus: Protein SprT (165 aa).

A SprT-like domain is found at 22 to 163 (LAQANLKLGR…RCVHCGEQLT (142 aa)). A Zn(2+)-binding site is contributed by His-78. The active site involves Glu-79. Residue His-82 coordinates Zn(2+).

This sequence belongs to the SprT family. The cofactor is Zn(2+).

The protein localises to the cytoplasm. This is Protein SprT from Escherichia fergusonii (strain ATCC 35469 / DSM 13698 / CCUG 18766 / IAM 14443 / JCM 21226 / LMG 7866 / NBRC 102419 / NCTC 12128 / CDC 0568-73).